A 492-amino-acid chain; its full sequence is MRLAAASNEAYAASLAVSELLSCHQCGGDRGQDEELGIRIPRPLGHGPSRFIPEKEMLQVGSEDAQMHALFADSFAALGRLDNITLVMVFHPQYLESFLKTQHYLLQMDGPLPLHYRHYIGIMAAARHQCSYLVNLHVSDFLHVGGDPKWLNGLENAPQKLQNLGELNKVLAHRPWLITKEHIEGLLKAEEHSWSLAELVHAVVLLTHYHSLASFTFGCGISPEIHCDGGHTFRPPSVSNYCICDITNGNHSVDEMQVNSAGNASVSDSFFEVEALMEKMRQLQECREEEEASQEEMASRFEMEKRESMFVFSSDDDEVTPARDVSRHFEDTSYGYKDFSRHGMHVPTFRVQDYCWEDHGYSLVNRLYPDVGQLIDEKFHIAYNLTYNTMAMHKDVDTSMLRRAIWNYIHCMFGIRYDDYDYGEINQLLDRSFKVYIKTVVCTPEKVTKRMYDSFWRQFKHSEKVHVNLLLIEARMQAELLYALRAITRYMT.

Residues 71-252 (FADSFAALGR…ICDITNGNHS (182 aa)) form an N-terminal domain; may mediate the alkylhydroperoxide reductase activity region. Cys-130 (cysteine sulfenic acid (-SOH) intermediate) is an active-site residue. Phosphoserine occurs at positions 293 and 314. A C-terminal domain; mediates TORC1 regulation region spans residues 321–492 (PARDVSRHFE…ALRAITRYMT (172 aa)). L-leucine is bound by residues 386-389 (TYNT), Thr-398, and Glu-463.

This sequence belongs to the sestrin family. In terms of assembly, interacts with the GATOR2 complex which is composed of MIOS, SEC13, SEH1L, WDR24 and WDR59; the interaction is negatively regulated by leucine. Interacts with RRAGA, RRAGB, RRAGC and RRAGD; may function as a guanine nucleotide dissociation inhibitor for RRAGs and regulate them. Interacts with KEAP1, RBX1 and SQSTM1; in the SQSTM1-dependent autophagic degradation of KEAP1. May interact with PRDX1. In terms of tissue distribution, highly expressed in heart and also detected in liver and skeletal muscles (at protein level).

The protein localises to the nucleus. It localises to the cytoplasm. It catalyses the reaction a hydroperoxide + L-cysteinyl-[protein] = S-hydroxy-L-cysteinyl-[protein] + an alcohol. Functionally, functions as an intracellular leucine sensor that negatively regulates the TORC1 signaling pathway through the GATOR complex. In absence of leucine, binds the GATOR subcomplex GATOR2 and prevents TORC1 signaling. Binding of leucine to SESN2 disrupts its interaction with GATOR2 thereby activating the TORC1 signaling pathway. This stress-inducible metabolic regulator may also play a role in protection against oxidative and genotoxic stresses. May positively regulate the transcription by NFE2L2 of genes involved in the response to oxidative stress by facilitating the SQSTM1-mediated autophagic degradation of KEAP1. Moreover, may prevent the accumulation of reactive oxygen species (ROS) through the alkylhydroperoxide reductase activity born by the N-terminal domain of the protein. Was originally reported to contribute to oxidative stress resistance by reducing PRDX1. However, this could not be confirmed. The sequence is that of Sestrin-1 from Mus musculus (Mouse).